The following is a 408-amino-acid chain: Histidine--tRNA ligase (408 aa).

Belongs to the class-II aminoacyl-tRNA synthetase family. In terms of assembly, homodimer.

The protein localises to the cytoplasm. The catalysed reaction is tRNA(His) + L-histidine + ATP = L-histidyl-tRNA(His) + AMP + diphosphate + H(+). The chain is Histidine--tRNA ligase from Campylobacter jejuni subsp. jejuni serotype O:2 (strain ATCC 700819 / NCTC 11168).